The chain runs to 788 residues: Endonuclease MutS2 (788 aa).

332–339 provides a ligand contact to ATP; it reads GPNTGGKT. The Smr domain occupies 713–788; the sequence is IDLRGLDSEE…GTGVTVVELK (76 aa).

Belongs to the DNA mismatch repair MutS family. MutS2 subfamily. In terms of assembly, homodimer. Binds to stalled ribosomes, contacting rRNA.

Endonuclease that is involved in the suppression of homologous recombination and thus may have a key role in the control of bacterial genetic diversity. Functionally, acts as a ribosome collision sensor, splitting the ribosome into its 2 subunits. Detects stalled/collided 70S ribosomes which it binds and splits by an ATP-hydrolysis driven conformational change. Acts upstream of the ribosome quality control system (RQC), a ribosome-associated complex that mediates the extraction of incompletely synthesized nascent chains from stalled ribosomes and their subsequent degradation. Probably generates substrates for RQC. The chain is Endonuclease MutS2 from Clostridium acetobutylicum (strain ATCC 824 / DSM 792 / JCM 1419 / IAM 19013 / LMG 5710 / NBRC 13948 / NRRL B-527 / VKM B-1787 / 2291 / W).